A 366-amino-acid chain; its full sequence is Carbamoyl phosphate synthase small chain (366 aa).

The segment at 1–171 (MLERRYLVLE…KTPYVSTGSD (171 aa)) is CPSase. L-glutamine-binding residues include Ser-47, Gly-221, and Gly-223. The Glutamine amidotransferase type-1 domain occupies 173–360 (SVVLLDFGKK…MTMMKEFKEK (188 aa)). Cys-248 functions as the Nucleophile in the catalytic mechanism. L-glutamine-binding residues include Leu-249, Gln-252, Asn-290, Gly-292, and Tyr-293. Active-site residues include His-333 and Glu-335.

It belongs to the CarA family. As to quaternary structure, composed of two chains; the small (or glutamine) chain promotes the hydrolysis of glutamine to ammonia, which is used by the large (or ammonia) chain to synthesize carbamoyl phosphate. Tetramer of heterodimers (alpha,beta)4.

The catalysed reaction is hydrogencarbonate + L-glutamine + 2 ATP + H2O = carbamoyl phosphate + L-glutamate + 2 ADP + phosphate + 2 H(+). It carries out the reaction L-glutamine + H2O = L-glutamate + NH4(+). Its pathway is amino-acid biosynthesis; L-arginine biosynthesis; carbamoyl phosphate from bicarbonate: step 1/1. It functions in the pathway pyrimidine metabolism; UMP biosynthesis via de novo pathway; (S)-dihydroorotate from bicarbonate: step 1/3. Its function is as follows. Small subunit of the glutamine-dependent carbamoyl phosphate synthetase (CPSase). CPSase catalyzes the formation of carbamoyl phosphate from the ammonia moiety of glutamine, carbonate, and phosphate donated by ATP, constituting the first step of 2 biosynthetic pathways, one leading to arginine and/or urea and the other to pyrimidine nucleotides. The small subunit (glutamine amidotransferase) binds and cleaves glutamine to supply the large subunit with the substrate ammonia. In Staphylococcus haemolyticus (strain JCSC1435), this protein is Carbamoyl phosphate synthase small chain.